The primary structure comprises 211 residues: tRNA (guanine-N(7)-)-methyltransferase (211 aa).

Positions 43, 68, 95, and 117 each coordinate S-adenosyl-L-methionine. Substrate contacts are provided by residues lysine 121, aspartate 153, and 190–193 (TEYE).

This sequence belongs to the class I-like SAM-binding methyltransferase superfamily. TrmB family.

It catalyses the reaction guanosine(46) in tRNA + S-adenosyl-L-methionine = N(7)-methylguanosine(46) in tRNA + S-adenosyl-L-homocysteine. It participates in tRNA modification; N(7)-methylguanine-tRNA biosynthesis. Catalyzes the formation of N(7)-methylguanine at position 46 (m7G46) in tRNA. The chain is tRNA (guanine-N(7)-)-methyltransferase from Clostridium kluyveri (strain ATCC 8527 / DSM 555 / NBRC 12016 / NCIMB 10680 / K1).